Consider the following 233-residue polypeptide: Small ribosomal subunit protein uS2 (233 aa).

Belongs to the universal ribosomal protein uS2 family.

In Clostridium acetobutylicum (strain ATCC 824 / DSM 792 / JCM 1419 / IAM 19013 / LMG 5710 / NBRC 13948 / NRRL B-527 / VKM B-1787 / 2291 / W), this protein is Small ribosomal subunit protein uS2.